A 162-amino-acid polypeptide reads, in one-letter code: Transcription antitermination protein NusB (162 aa).

Belongs to the NusB family.

Its function is as follows. Involved in transcription antitermination. Required for transcription of ribosomal RNA (rRNA) genes. Binds specifically to the boxA antiterminator sequence of the ribosomal RNA (rrn) operons. This is Transcription antitermination protein NusB from Mycobacterium sp. (strain JLS).